The sequence spans 155 residues: RNA pyrophosphohydrolase (155 aa).

Residues 5–147 (KYRPNVAAII…KRQVYRQVIA (143 aa)) enclose the Nudix hydrolase domain. The Nudix box motif lies at 42–63 (GGIDEGETPLEALYRELLEEIG).

The protein belongs to the Nudix hydrolase family. RppH subfamily. Requires a divalent metal cation as cofactor.

Its function is as follows. Accelerates the degradation of transcripts by removing pyrophosphate from the 5'-end of triphosphorylated RNA, leading to a more labile monophosphorylated state that can stimulate subsequent ribonuclease cleavage. The polypeptide is RNA pyrophosphohydrolase (Helicobacter pylori (strain P12)).